We begin with the raw amino-acid sequence, 686 residues long: MIPGKYRSVSGRAANNVNCGLHLVIQTSSLSDKNKVEFRLNRETPPFPGRLLQHDLERNYSSRQGDHISLVSSSMPAFPILQRSSEEKTLYSDRLTLERQKLTVCPIIDGEEHLRLLNFQHNFITRIQNISNLQRLIFLDLYDNQIEEISGLSTLKSLRVLLLGKNRIKKISNLENLKNLDVLDLHGNQITKIENVNHLCDLRVLNLARNLLSHVDNLNGLDSLTELNLRHNQITFVRDVDNLPCLQRLFLSFNNITSFESVSCLAESTSLSDITFDGNPIAQESWYKHTVLQNMMQLRQLDMKRITEEERRVASVVPKKEEEKKRESHKQSLLKEKKRLTINNVARKWDLQQRVANIASTQDRKDSESPPQESCQLDGGNISAFPEEAGSLDAGLSSALQGLSVTETHLVEIDGETLSLYGSGALECLDRNWSVQTAGMVTTVSFTFIEFDEIVQVLPKLKMKFPNSLHLKFRETNLVMLQQFNALAQLRRVDQLTIDPQGNPVVNFTLWKYYVLFRLSHFSMQKINGTEVTQNDMIMAERLFGILAHVASSELPQYRMISILGDARKKQFRYLLESKGKKPGIICEETSDSKRFLGENTNRATLNYTTREFYHEKLEEIKDKKKFCRLYVEDLVKEATAINMKNEALQKLWPQMFIELVRDAVIEIRSKDSYMKLCLQQITDQK.

7 LRR repeats span residues 113 to 134 (HLRL…SNLQ), 135 to 156 (RLIF…STLK), 157 to 178 (SLRV…ENLK), 179 to 200 (NLDV…NHLC), 201 to 222 (DLRV…NGLD), 223 to 244 (SLTE…DNLP), and 245 to 266 (CLQR…SCLA). Positions 279-317 (NPIAQESWYKHTVLQNMMQLRQLDMKRITEEERRVASVV) constitute an LRRCT domain. Disordered regions lie at residues 311–332 (RRVA…HKQS) and 359–381 (ASTQ…DGGN). The stretch at 319–341 (KKEEEKKRESHKQSLLKEKKRLT) forms a coiled coil.

In terms of assembly, part of the neuronal tubulin polyglutamylase complex which contains TPGS1, TPGS2, TTLL1, LRRC49 and NICN1. Interacts with PCM1; TTLL1, TPGS1, TPGS2 and LRRC49.

The protein resides in the cytoplasm. Its subcellular location is the cytoskeleton. The protein localises to the microtubule organizing center. It is found in the centrosome. It localises to the centriolar satellite. Subunit of the tubulin polyglutamylase complex (TPGC). The complex mediates cilia and flagella polyglutamylation which is essential for their biogenesis and motility. This is Leucine-rich repeat-containing protein 49 (Lrrc49) from Mus musculus (Mouse).